A 107-amino-acid polypeptide reads, in one-letter code: Guanylate cyclase activator 2B (107 aa).

The first 21 residues, 1–21, serve as a signal peptide directing secretion; sequence MSGSQLWAAVVVLLLLQSAQG. Positions 22–92 are excised as a propeptide; sequence VYIKYHGFQV…STFKALRTIA (71 aa). Intrachain disulfides connect Cys63/Cys76, Cys96/Cys104, and Cys99/Cys107.

It belongs to the guanylin family.

It localises to the secreted. In terms of biological role, endogenous activator of intestinal guanylate cyclase. It stimulates this enzyme through the same receptor binding region as the heat-stable enterotoxins. May be a potent physiological regulator of intestinal fluid and electrolyte transport. May be an autocrine/paracrine regulator of intestinal salt and water transport. The polypeptide is Guanylate cyclase activator 2B (GUCA2B) (Notomys alexis (Spinifex hopping mouse)).